A 428-amino-acid polypeptide reads, in one-letter code: MTRRRSALASWLLLSLLGVAASLEVSESPGSVQVARGQTAVLPCAFSTSAALLNLNVIWMVIPLSNANQPEQVILYQGGQMFDGALRFHGRVGFTGTMPATNVSIFINNTQLSDTGTYQCLVNNLPDRGGRNIGVTGLTVLVPPSAPNCQIQGSQDIGSDVILLCSSEEGIPRPTYLWEKLDNTLKLPPTATQDQVQGTVTIRNISALSSGLYQCVASNAIGTSTCLLDLQVISPQPRSVGVIAGAVGTGAVLIVICLALTSGAFFYWRSKNKEEEEEEIPNEIREDDLPPKCSSAKAFHTEISSSENNTLTSSNTYNSRYWNNNPKPHKNTESFNHFSDLRQSFSGNAVIPSIYANGNHLVLGPHKTLVVTANRGSSPQVMPRNNGSVSRKPWSQHTHSYTVSQMTLERIGAVPVMVPAQSRAGSLV.

The signal sequence occupies residues 1-22 (MTRRRSALASWLLLSLLGVAAS). An Ig-like V-type domain is found at 23-136 (LEVSESPGSV…DRGGRNIGVT (114 aa)). Residues 23 to 239 (LEVSESPGSV…LQVISPQPRS (217 aa)) lie on the Extracellular side of the membrane. 2 cysteine pairs are disulfide-bonded: Cys-44–Cys-120 and Cys-165–Cys-215. The N-linked (GlcNAc...) asparagine glycan is linked to Asn-102. The Ig-like C2-type domain maps to 144–234 (PSAPNCQIQG…TCLLDLQVIS (91 aa)). Residues 240–260 (VGVIAGAVGTGAVLIVICLAL) form a helical membrane-spanning segment. The Cytoplasmic portion of the chain corresponds to 261 to 428 (TSGAFFYWRS…PAQSRAGSLV (168 aa)). Arg-375 bears the Omega-N-methylarginine mark.

N-glycosylated.

The protein localises to the cell membrane. Functionally, functions as a cell adhesion molecule through homophilic interaction. Stimulates cell growth. This is Immunoglobulin superfamily member 11 (Igsf11) from Rattus norvegicus (Rat).